A 241-amino-acid chain; its full sequence is ATP synthase subunit a (241 aa).

Transmembrane regions (helical) follow at residues 30–50 (GQVF…ISVG), 91–111 (FIGT…LIPW), 128–148 (INTT…AGLS), 193–213 (LVVG…VMFL), and 214–234 (GLFT…YYIG).

It belongs to the ATPase A chain family. F-type ATPases have 2 components, CF(1) - the catalytic core - and CF(0) - the membrane proton channel. CF(1) has five subunits: alpha(3), beta(3), gamma(1), delta(1), epsilon(1). CF(0) has four main subunits: a, b, b' and c.

It localises to the cellular thylakoid membrane. Functionally, key component of the proton channel; it plays a direct role in the translocation of protons across the membrane. The sequence is that of ATP synthase subunit a from Prochlorococcus marinus subsp. pastoris (strain CCMP1986 / NIES-2087 / MED4).